The sequence spans 528 residues: T-complex protein 1 subunit gamma (528 aa).

Ser250 carries the phosphoserine modification. Cys364 and Cys370 form a disulfide bridge.

The protein belongs to the TCP-1 chaperonin family. Heterooligomeric complex of about 850 to 900 kDa that forms two stacked rings, 12 to 16 nm in diameter.

It localises to the cytoplasm. In terms of biological role, molecular chaperone; assists the folding of proteins upon ATP hydrolysis. Known to play a role, in vitro, in the folding of actin and tubulin. The polypeptide is T-complex protein 1 subunit gamma (cct3) (Schizosaccharomyces pombe (strain 972 / ATCC 24843) (Fission yeast)).